Here is a 377-residue protein sequence, read N- to C-terminus: Probable O-methyltransferase 3 (377 aa).

D241 is an S-adenosyl-L-methionine binding site. Catalysis depends on H279, which acts as the Proton acceptor.

It belongs to the class I-like SAM-binding methyltransferase superfamily. Cation-independent O-methyltransferase family. As to expression, highly expressed in lupulin glands. Detected in early-, mid- and late-stage cones.

This is Probable O-methyltransferase 3 from Humulus lupulus (European hop).